Here is a 371-residue protein sequence, read N- to C-terminus: Phospho-N-acetylmuramoyl-pentapeptide-transferase (371 aa).

The next 10 membrane-spanning stretches (helical) occupy residues 25–45 (YLTFRTGMSMLTAYVVAVAMG), 79–99 (TMGGFMILAGLFVGSLLFADL), 104–124 (VWVVLGITGSFGVLGFMDDYA), 139–159 (KLIAQFIISILAAVVLIIFAP), 179–199 (LVINLGWFYVAFAAITIAGFS), 210–230 (GLAIVPVMFAASTFGLIAYLV), 247–267 (VGELAVVCGAIIGGGMGFLWY), 274–294 (IFMGDTGSLALGGALGSIAVC), 299–319 (LVLGIVGGLFVAEALSVMIQV), and 348–368 (TVVIRFWIVAMMLSFVGLATL).

This sequence belongs to the glycosyltransferase 4 family. MraY subfamily. It depends on Mg(2+) as a cofactor.

Its subcellular location is the cell inner membrane. It catalyses the reaction UDP-N-acetyl-alpha-D-muramoyl-L-alanyl-gamma-D-glutamyl-meso-2,6-diaminopimeloyl-D-alanyl-D-alanine + di-trans,octa-cis-undecaprenyl phosphate = di-trans,octa-cis-undecaprenyl diphospho-N-acetyl-alpha-D-muramoyl-L-alanyl-D-glutamyl-meso-2,6-diaminopimeloyl-D-alanyl-D-alanine + UMP. It participates in cell wall biogenesis; peptidoglycan biosynthesis. In terms of biological role, catalyzes the initial step of the lipid cycle reactions in the biosynthesis of the cell wall peptidoglycan: transfers peptidoglycan precursor phospho-MurNAc-pentapeptide from UDP-MurNAc-pentapeptide onto the lipid carrier undecaprenyl phosphate, yielding undecaprenyl-pyrophosphoryl-MurNAc-pentapeptide, known as lipid I. The protein is Phospho-N-acetylmuramoyl-pentapeptide-transferase of Caulobacter sp. (strain K31).